The sequence spans 650 residues: Threonine--tRNA ligase (650 aa).

One can recognise a TGS domain in the interval 3 to 65 (DLVKVTLPDG…ERDARLEIVT (63 aa)). The tract at residues 248 to 548 (DHRRLGPQLG…LVEHYAGAFP (301 aa)) is catalytic. 3 residues coordinate Zn(2+): Cys-349, His-400, and His-525.

Belongs to the class-II aminoacyl-tRNA synthetase family. As to quaternary structure, homodimer. Requires Zn(2+) as cofactor.

The protein resides in the cytoplasm. It catalyses the reaction tRNA(Thr) + L-threonine + ATP = L-threonyl-tRNA(Thr) + AMP + diphosphate + H(+). Functionally, catalyzes the attachment of threonine to tRNA(Thr) in a two-step reaction: L-threonine is first activated by ATP to form Thr-AMP and then transferred to the acceptor end of tRNA(Thr). Also edits incorrectly charged L-seryl-tRNA(Thr). In Anaeromyxobacter dehalogenans (strain 2CP-1 / ATCC BAA-258), this protein is Threonine--tRNA ligase.